The sequence spans 478 residues: Cytochrome c-552 (478 aa).

Positions 1 to 26 are cleaved as a signal peptide; it reads MARKTLRARRFFSLIFPFFFITSVYA. His-94 contributes to the heme c binding site. Cys-122, Cys-125, and Lys-126 together coordinate heme. Heme c contacts are provided by Cys-160, Cys-163, His-164, Cys-209, Cys-212, and His-213. 4 residues coordinate Ca(2+): Glu-215, Tyr-216, Lys-261, and Gln-263. Tyr-216 contacts substrate. Residue His-264 coordinates substrate. His-275, Cys-282, Cys-285, His-286, His-301, Cys-314, Cys-317, His-318, and His-393 together coordinate heme c.

It belongs to the cytochrome c-552 family. Ca(2+) serves as cofactor. The cofactor is heme c.

It is found in the periplasm. The catalysed reaction is 6 Fe(III)-[cytochrome c] + NH4(+) + 2 H2O = 6 Fe(II)-[cytochrome c] + nitrite + 8 H(+). It participates in nitrogen metabolism; nitrate reduction (assimilation). Catalyzes the reduction of nitrite to ammonia, consuming six electrons in the process. In Salmonella schwarzengrund (strain CVM19633), this protein is Cytochrome c-552.